The sequence spans 366 residues: tRNA(Met) cytidine acetate ligase (366 aa).

ATP contacts are provided by residues isoleucine 7–leucine 20, glycine 101, asparagine 145, and arginine 170.

This sequence belongs to the TmcAL family.

It is found in the cytoplasm. It catalyses the reaction cytidine(34) in elongator tRNA(Met) + acetate + ATP = N(4)-acetylcytidine(34) in elongator tRNA(Met) + AMP + diphosphate. Functionally, catalyzes the formation of N(4)-acetylcytidine (ac(4)C) at the wobble position of elongator tRNA(Met), using acetate and ATP as substrates. First activates an acetate ion to form acetyladenylate (Ac-AMP) and then transfers the acetyl group to tRNA to form ac(4)C34. The polypeptide is tRNA(Met) cytidine acetate ligase (Pediococcus pentosaceus (strain ATCC 25745 / CCUG 21536 / LMG 10740 / 183-1w)).